We begin with the raw amino-acid sequence, 159 residues long: uncharacterized protein (159 aa).

This is an uncharacterized protein from Acanthamoeba polyphaga (Amoeba).